Reading from the N-terminus, the 560-residue chain is 5'-nucleotidase (560 aa).

The N-terminal stretch at 1 to 21 (MNQRLIIKTALSAAILASLAG) is a signal peptide. The N-palmitoyl cysteine moiety is linked to residue Cys-22. A lipid anchor (S-diacylglycerol cysteine) is attached at Cys-22. A divalent metal cation is bound by residues Asp-45, His-47, Asp-88, Asn-120, His-221, His-256, and Gln-258. Substrate is bound by residues Phe-432 and 501–507 (YNASGGD).

The protein belongs to the 5'-nucleotidase family. It depends on chloride as a cofactor. Mg(2+) is required as a cofactor.

It localises to the cell outer membrane. It catalyses the reaction a ribonucleoside 5'-phosphate + H2O = a ribonucleoside + phosphate. Degradation of extracellular 5'-nucleotides for nutritional needs. The chain is 5'-nucleotidase (nutA) from Vibrio parahaemolyticus serotype O3:K6 (strain RIMD 2210633).